Consider the following 126-residue polypeptide: 13 kDa ribonucleoprotein-associated protein (126 aa).

The protein belongs to the eukaryotic ribosomal protein eL8 family. In terms of assembly, component of the U3 snoRNP particle. Binds to the C'/D and B/C motifs in U3 snoRNA. Component of the 25S U4/U6.U5 tri-snRNP particle, a subcomplex of the spliceosome. Binds to the 5' stem-loop of U4 snRNA.

The protein localises to the nucleus. It localises to the nucleolus. Its function is as follows. Common component of the spliceosome and rRNA processing machinery. In association with the spliceosomal U4/U6.U5 tri-snRNP particle, required for splicing of pre-mRNA. In association with box C/D snoRNPs, required for processing of pre-ribosomal RNA (rRNA) and site-specific 2'-O-methylation of substrate RNAs. Essential for the accumulation and stability of U4 snRNA, U6 snRNA, and box C/D snoRNAs. The chain is 13 kDa ribonucleoprotein-associated protein (SNU13) from Candida glabrata (strain ATCC 2001 / BCRC 20586 / JCM 3761 / NBRC 0622 / NRRL Y-65 / CBS 138) (Yeast).